The sequence spans 501 residues: Zinc finger protein PLAG1 (501 aa).

The segment at 1–30 is disordered; the sequence is MATVIPGDLSEVRDTQKVPSGKRKRGETKP. Positions 22–25 match the Nuclear localization signal motif; that stretch reads KRKR. 7 consecutive C2H2-type zinc fingers follow at residues 34–56, 62–86, 92–114, 121–143, 150–172, 185–207, and 213–236; these read FPCQ…SYSH, YKCT…MATH, HKCN…LHTH, FKCE…LALH, LTCK…LKTH, HQCE…MVVH, and FLCQ…KKSH. 2 stretches are compositionally biased toward low complexity: residues 366 to 380 and 455 to 467; these read SGMP…ASSS and TQLP…PQDP. Disordered stretches follow at residues 366 to 406 and 447 to 474; these read SGMP…GSVP and QEEA…IGLG.

The protein belongs to the krueppel C2H2-type zinc-finger protein family. As to expression, expressed in nephroblastoma.

Its subcellular location is the nucleus. Its function is as follows. Transcription factor and proto-oncogene whose activation results in up-regulation of target genes, such as IGFII, leading to uncontrolled cell proliferation. This is Zinc finger protein PLAG1 (PLAG1) from Gallus gallus (Chicken).